The following is a 199-amino-acid chain: Recombination protein RecR (199 aa).

A C4-type zinc finger spans residues 57 to 72 (CRSCRTFTEESHCPIC). A Toprim domain is found at 81 to 176 (EQICVVETPA…SVSRIAHGVP (96 aa)).

The protein belongs to the RecR family.

Its function is as follows. May play a role in DNA repair. It seems to be involved in an RecBC-independent recombinational process of DNA repair. It may act with RecF and RecO. This chain is Recombination protein RecR, found in Shewanella sediminis (strain HAW-EB3).